The following is a 317-amino-acid chain: UDP-3-O-acylglucosamine N-acyltransferase (317 aa).

The active-site Proton acceptor is the H229.

It belongs to the transferase hexapeptide repeat family. LpxD subfamily. In terms of assembly, homotrimer.

It catalyses the reaction a UDP-3-O-[(3R)-3-hydroxyacyl]-alpha-D-glucosamine + a (3R)-hydroxyacyl-[ACP] = a UDP-2-N,3-O-bis[(3R)-3-hydroxyacyl]-alpha-D-glucosamine + holo-[ACP] + H(+). It participates in bacterial outer membrane biogenesis; LPS lipid A biosynthesis. Its function is as follows. Catalyzes the N-acylation of UDP-3-O-acylglucosamine using 3-hydroxyacyl-ACP as the acyl donor. Is involved in the biosynthesis of lipid A, a phosphorylated glycolipid that anchors the lipopolysaccharide to the outer membrane of the cell. The chain is UDP-3-O-acylglucosamine N-acyltransferase from Campylobacter concisus (strain 13826).